The primary structure comprises 299 residues: Urease accessory protein UreD (299 aa).

Belongs to the UreD family. In terms of assembly, ureD, UreF and UreG form a complex that acts as a GTP-hydrolysis-dependent molecular chaperone, activating the urease apoprotein by helping to assemble the nickel containing metallocenter of UreC. The UreE protein probably delivers the nickel.

The protein localises to the cytoplasm. Its function is as follows. Required for maturation of urease via the functional incorporation of the urease nickel metallocenter. This Natronomonas pharaonis (strain ATCC 35678 / DSM 2160 / CIP 103997 / JCM 8858 / NBRC 14720 / NCIMB 2260 / Gabara) (Halobacterium pharaonis) protein is Urease accessory protein UreD.